A 200-amino-acid polypeptide reads, in one-letter code: MDESLAELGEHILGTLEESVLGFHVAFGELNVLAQAQSIARVLKFLRDDPACRFGTLLDITAVDYPQRPERFDVVYHLLSMHQNQRIRVTVRTNEETAVPSVVAVYPSANWYERETFDMYGVLFSDHPDLRRILTDYGFNGYPLRKDFPLTGYVEVRYDDDEKRVVYEPVKLVQEFRNFDFMSPWEGAEYLLPGDEKAEH.

This sequence belongs to the complex I 30 kDa subunit family. In terms of assembly, NDH-1 is composed of 14 different subunits. Subunits NuoB, C, D, E, F, and G constitute the peripheral sector of the complex.

Its subcellular location is the cell inner membrane. The enzyme catalyses a quinone + NADH + 5 H(+)(in) = a quinol + NAD(+) + 4 H(+)(out). Its function is as follows. NDH-1 shuttles electrons from NADH, via FMN and iron-sulfur (Fe-S) centers, to quinones in the respiratory chain. The immediate electron acceptor for the enzyme in this species is believed to be ubiquinone. Couples the redox reaction to proton translocation (for every two electrons transferred, four hydrogen ions are translocated across the cytoplasmic membrane), and thus conserves the redox energy in a proton gradient. This is NADH-quinone oxidoreductase subunit C from Parvibaculum lavamentivorans (strain DS-1 / DSM 13023 / NCIMB 13966).